Here is a 433-residue protein sequence, read N- to C-terminus: Steroid C26-monooxygenase (433 aa).

A substrate-binding site is contributed by G202. C377 serves as a coordination point for heme.

The protein belongs to the cytochrome P450 family. Heme serves as cofactor.

It carries out the reaction cholest-4-en-3-one + 6 reduced [2Fe-2S]-[ferredoxin] + 3 O2 + 5 H(+) = (25S)-3-oxocholest-4-en-26-oate + 6 oxidized [2Fe-2S]-[ferredoxin] + 4 H2O. The protein operates within steroid metabolism; cholesterol degradation. Functionally, involved in the utilization of cholesterol as the sole carbon and energy source by degrading the side chain during infection. Primarily catalyzes the sequential oxidation of the terminal methyl of cholest-4-en-3-one into (25S)-26-hydroxycholest-4-en-3-one (alcohol), (25S)-26-oxocholest-4-en-3-one (aldehyde), to finally yield the carboxylic acid (25S)-3-oxocholest-4-en-26-oate. Also able to sequentially oxidize cholesterol itself, not only cholest-4-en-3-one. The chain is Steroid C26-monooxygenase (cyp125) from Mycobacterium bovis (strain ATCC BAA-935 / AF2122/97).